Reading from the N-terminus, the 160-residue chain is Cytochrome c-type biogenesis protein CcmE (160 aa).

The Cytoplasmic portion of the chain corresponds to 1–8; sequence MNPRRKKR. The chain crosses the membrane as a helical; Signal-anchor for type II membrane protein span at residues 9-29; sequence LGVVLAILFGLSATIGLIIYA. Residues 30 to 160 lie on the Periplasmic side of the membrane; sequence LNQNMDLFYT…SQEQKQGSDQ (131 aa). The heme site is built by H128 and Y132.

It belongs to the CcmE/CycJ family.

The protein localises to the cell inner membrane. Its function is as follows. Heme chaperone required for the biogenesis of c-type cytochromes. Transiently binds heme delivered by CcmC and transfers the heme to apo-cytochromes in a process facilitated by CcmF and CcmH. This chain is Cytochrome c-type biogenesis protein CcmE, found in Vibrio cholerae serotype O1 (strain ATCC 39541 / Classical Ogawa 395 / O395).